The primary structure comprises 241 residues: GTP cyclohydrolase III (241 aa).

Belongs to the archaeal-type GTP cyclohydrolase family.

The enzyme catalyses GTP + 3 H2O = 2-amino-5-formylamino-6-(5-phospho-D-ribosylamino)pyrimidin-4(3H)-one + 2 phosphate + 2 H(+). In terms of biological role, catalyzes the formation of 2-amino-5-formylamino-6-ribofuranosylamino-4(3H)-pyrimidinone ribonucleotide monophosphate and inorganic phosphate from GTP. Also has an independent pyrophosphate phosphohydrolase activity. This chain is GTP cyclohydrolase III, found in Aeropyrum pernix (strain ATCC 700893 / DSM 11879 / JCM 9820 / NBRC 100138 / K1).